The primary structure comprises 202 residues: Adenylyl-sulfate kinase (202 aa).

31–38 provides a ligand contact to ATP; the sequence is GLSASGKS. Residue S105 is the Phosphoserine intermediate of the active site.

This sequence belongs to the APS kinase family.

The catalysed reaction is adenosine 5'-phosphosulfate + ATP = 3'-phosphoadenylyl sulfate + ADP + H(+). It functions in the pathway sulfur metabolism; hydrogen sulfide biosynthesis; sulfite from sulfate: step 2/3. Catalyzes the synthesis of activated sulfate. This chain is Adenylyl-sulfate kinase (MET14), found in Saccharomyces pastorianus (Lager yeast).